An 886-amino-acid chain; its full sequence is Inter-alpha-trypsin inhibitor heavy chain H3 (886 aa).

The signal sequence occupies residues 1-18; that stretch reads MWWPYLVLALLSGLEASG. A propeptide spanning residues 19 to 30 is cleaved from the precursor; the sequence is FPRSPLRLLGKR. The region spanning 26–155 is the VIT domain; sequence LLGKRSLPEG…KVTFELTYEE (130 aa). N88 carries N-linked (GlcNAc...) asparagine glycosylation. Residues 279–439 form the VWFA domain; it reads PKNIVFVIDI…YNFLETMALE (161 aa). N-linked (GlcNAc...) asparagine glycosylation is present at N577. D646 is subject to Aspartate 1-(chondroitin 4-sulfate)-ester. A propeptide spanning residues 647 to 886 is cleaved from the precursor; that stretch reads PHFIIQVPGK…HTDYIVPSLF (240 aa).

The protein belongs to the ITIH family. As to quaternary structure, I-alpha-I plasma protease inhibitors are assembled from one or two heavy chains (HC) and one light chain, bikunin. Pre-alpha-inhibitor (P-alpha-I) is composed of ITIH3/HC3 and bikunin. Post-translationally, heavy chains are linked to bikunin via chondroitin 4-sulfate esterified to the alpha-carboxyl of the C-terminal aspartate after propeptide cleavage.

It is found in the secreted. May act as a carrier of hyaluronan in serum or as a binding protein between hyaluronan and other matrix protein, including those on cell surfaces in tissues to regulate the localization, synthesis and degradation of hyaluronan which are essential to cells undergoing biological processes. This chain is Inter-alpha-trypsin inhibitor heavy chain H3 (ITIH3), found in Mesocricetus auratus (Golden hamster).